The chain runs to 202 residues: LexA repressor (202 aa).

The H-T-H motif DNA-binding region spans 29-49 (VREICEATGLKSTSTVHGHLT). Residues S126 and K163 each act as for autocatalytic cleavage activity in the active site.

It belongs to the peptidase S24 family. Homodimer.

The enzyme catalyses Hydrolysis of Ala-|-Gly bond in repressor LexA.. In terms of biological role, represses a number of genes involved in the response to DNA damage (SOS response), including recA and lexA. In the presence of single-stranded DNA, RecA interacts with LexA causing an autocatalytic cleavage which disrupts the DNA-binding part of LexA, leading to derepression of the SOS regulon and eventually DNA repair. This Caldicellulosiruptor saccharolyticus (strain ATCC 43494 / DSM 8903 / Tp8T 6331) protein is LexA repressor.